A 250-amino-acid polypeptide reads, in one-letter code: 1-(5-phosphoribosyl)-5-[(5-phosphoribosylamino)methylideneamino] imidazole-4-carboxamide isomerase (250 aa).

Aspartate 8 acts as the Proton acceptor in catalysis. Aspartate 131 functions as the Proton donor in the catalytic mechanism.

This sequence belongs to the HisA/HisF family.

The protein resides in the cytoplasm. The catalysed reaction is 1-(5-phospho-beta-D-ribosyl)-5-[(5-phospho-beta-D-ribosylamino)methylideneamino]imidazole-4-carboxamide = 5-[(5-phospho-1-deoxy-D-ribulos-1-ylimino)methylamino]-1-(5-phospho-beta-D-ribosyl)imidazole-4-carboxamide. Its pathway is amino-acid biosynthesis; L-histidine biosynthesis; L-histidine from 5-phospho-alpha-D-ribose 1-diphosphate: step 4/9. The protein is 1-(5-phosphoribosyl)-5-[(5-phosphoribosylamino)methylideneamino] imidazole-4-carboxamide isomerase of Paraburkholderia xenovorans (strain LB400).